The primary structure comprises 193 residues: Dirigent protein 11 (193 aa).

The first 33 residues, 1 to 33 (MLQITNMATPFLLLLLPLIFSTVLLLTITVTQS), serve as a signal peptide directing secretion. Residues Asn-78 and Asn-136 are each glycosylated (N-linked (GlcNAc...) asparagine).

The protein belongs to the plant dirigent protein family. In terms of assembly, homodimer.

It localises to the secreted. The protein localises to the extracellular space. Its subcellular location is the apoplast. Its function is as follows. Dirigent proteins impart stereoselectivity on the phenoxy radical-coupling reaction, yielding optically active lignans from two molecules of coniferyl alcohol in the biosynthesis of lignans, flavonolignans, and alkaloids and thus plays a central role in plant secondary metabolism. The polypeptide is Dirigent protein 11 (DIR11) (Arabidopsis thaliana (Mouse-ear cress)).